A 225-amino-acid polypeptide reads, in one-letter code: Ribose-5-phosphate isomerase A (225 aa).

Substrate is bound by residues 26–29 (TGST), 82–85 (DGAD), and 95–98 (KGGG). E104 functions as the Proton acceptor in the catalytic mechanism. K122 contacts substrate.

It belongs to the ribose 5-phosphate isomerase family. As to quaternary structure, homodimer.

It catalyses the reaction aldehydo-D-ribose 5-phosphate = D-ribulose 5-phosphate. It functions in the pathway carbohydrate degradation; pentose phosphate pathway; D-ribose 5-phosphate from D-ribulose 5-phosphate (non-oxidative stage): step 1/1. Its function is as follows. Catalyzes the reversible conversion of ribose-5-phosphate to ribulose 5-phosphate. The polypeptide is Ribose-5-phosphate isomerase A (Streptococcus gordonii (strain Challis / ATCC 35105 / BCRC 15272 / CH1 / DL1 / V288)).